Reading from the N-terminus, the 177-residue chain is Bifunctional protein PyrR (177 aa).

Residues 42–43 (SR), 104–112 (DDVLYTGRT), and R137 each bind substrate. Positions 100–112 (VVIVDDVLYTGRT) match the PRPP-binding motif.

It belongs to the purine/pyrimidine phosphoribosyltransferase family. PyrR subfamily.

The catalysed reaction is UMP + diphosphate = 5-phospho-alpha-D-ribose 1-diphosphate + uracil. Regulates the transcription of the pyrimidine nucleotide (pyr) operon in response to exogenous pyrimidines. Its function is as follows. Also displays a weak uracil phosphoribosyltransferase activity which is not physiologically significant. The sequence is that of Bifunctional protein PyrR from Fusobacterium nucleatum subsp. nucleatum (strain ATCC 25586 / DSM 15643 / BCRC 10681 / CIP 101130 / JCM 8532 / KCTC 2640 / LMG 13131 / VPI 4355).